The chain runs to 327 residues: UDP-N-acetylenolpyruvoylglucosamine reductase (327 aa).

Positions 42–223 constitute an FAD-binding PCMH-type domain; it reads RTGGLAELFY…RAAMDEVALH (182 aa). Arginine 188 is an active-site residue. Serine 237 functions as the Proton donor in the catalytic mechanism. The active site involves glutamate 307.

It belongs to the MurB family. FAD is required as a cofactor.

The protein resides in the cytoplasm. The enzyme catalyses UDP-N-acetyl-alpha-D-muramate + NADP(+) = UDP-N-acetyl-3-O-(1-carboxyvinyl)-alpha-D-glucosamine + NADPH + H(+). It participates in cell wall biogenesis; peptidoglycan biosynthesis. Functionally, cell wall formation. This Bartonella tribocorum (strain CIP 105476 / IBS 506) protein is UDP-N-acetylenolpyruvoylglucosamine reductase.